The primary structure comprises 1733 residues: Polyketide synthase Pks13 (1733 aa).

Residues 17–95 (ELTVPEMRQW…SLATRIIEGE (79 aa)) form the Carrier 1 domain. Serine 55 carries the O-(pantetheine 4'-phosphoryl)serine modification. The Ketosynthase family 3 (KS3) domain occupies 116–541 (RVDIAIVGLS…GANAHVVVRE (426 aa)). The active-site Acyl-thioester intermediate; for beta-ketoacyl synthase activity is the cysteine 287. Active-site for beta-ketoacyl synthase activity residues include histidine 423 and histidine 463. Residues 548 to 560 (VEKEPEPEPEPKA) are compositionally biased toward basic and acidic residues. A disordered region spans residues 548–567 (VEKEPEPEPEPKAAAEPAEA). Residues 713–1034 (VWVLAGFGAQ…MVSTMAQLYV (322 aa)) form an acyltransferase region. The active-site Acyl-ester intermediate; for acyltransferase activity is serine 801. A Carrier 2 domain is found at 1232–1309 (ETIAERLGLI…KLIEYAVEHR (78 aa)). Residue serine 1266 is modified to O-(pantetheine 4'-phosphoryl)serine. Residues 1344–1368 (PVDSEAGVALPSPQNGEQPNPTGPA) form a disordered region. The thioesterase-like stretch occupies residues 1470-1563 (PVFVFHPAGG…RFVGLIDAVR (94 aa)). Serine 1533 functions as the For thioesterase-like activity in the catalytic mechanism.

In terms of processing, 4'-phosphopantetheine is transferred from CoA to specific serines of apo-Pks13 by PptT.

It functions in the pathway lipid metabolism; mycolic acid biosynthesis. With respect to regulation, the presence of FadD32 is necessary for the transfer of the acyl chain from the AMP carrier onto Pks13. Involved in the biosynthesis of mycolic acids. Forms, with FadD32, the initiation module of the mycolic condensation system. Synthesizes, in coupled reaction with FadD32, the biosynthetic precursors of mycolic acids, alpha-alkyl beta-ketoacids, via the condensation of two long chain fatty acid derivatives, a very long meromycoloyl-AMP and a shorter 2-carboxyacyl-CoA. The acyl chain of the acyl-AMP produced by FadD32 is specifically transferred onto the N-terminal ACP domain of Pks13, and then transferred onto the KS domain. The extender unit carboxyacyl-CoA is specifically loaded onto the AT domain, which catalyzes the covalent attachment of the carboxyacyl chain to its active site, and its subsequent transfer onto the P-pant arm of the C-terminal ACP domain. The KS domain catalyzes the condensation between the two loaded fatty acyl chains to produce an alpha-alkyl beta-ketothioester linked to the C-ACP domain. Then, the thioesterase-like domain acts as a transacylase and is responsible for both the release and the transfer of the alpha-alkyl beta-ketoacyl chain onto a polyol acceptor molecule, particularly trehalose, leading to the formation of the trehalose monomycolate precursor. In Mycobacterium tuberculosis (strain ATCC 25618 / H37Rv), this protein is Polyketide synthase Pks13.